We begin with the raw amino-acid sequence, 212 residues long: Deoxyribose-phosphate aldolase (212 aa).

The Proton donor/acceptor role is filled by Asp89. Lys151 serves as the catalytic Schiff-base intermediate with acetaldehyde. The active-site Proton donor/acceptor is Lys180.

Belongs to the DeoC/FbaB aldolase family. DeoC type 1 subfamily.

The protein resides in the cytoplasm. The catalysed reaction is 2-deoxy-D-ribose 5-phosphate = D-glyceraldehyde 3-phosphate + acetaldehyde. Its pathway is carbohydrate degradation; 2-deoxy-D-ribose 1-phosphate degradation; D-glyceraldehyde 3-phosphate and acetaldehyde from 2-deoxy-alpha-D-ribose 1-phosphate: step 2/2. In terms of biological role, catalyzes a reversible aldol reaction between acetaldehyde and D-glyceraldehyde 3-phosphate to generate 2-deoxy-D-ribose 5-phosphate. The chain is Deoxyribose-phosphate aldolase from Clostridium botulinum (strain Kyoto / Type A2).